The chain runs to 363 residues: NADH-quinone oxidoreductase subunit H (363 aa).

9 helical membrane passes run 62–82 (GPMY…KLLF), 94–114 (AIFV…WAVV), 127–147 (VGLL…ILAG), 166–186 (VVSY…AAGS), 202–222 (FFDW…VSGV), 239–257 (IVAG…LFFL), 264–286 (ILVS…QGWV), 293–313 (LIDW…LFFA), and 339–359 (FIPL…SGVI).

Belongs to the complex I subunit 1 family. In terms of assembly, NDH-1 is composed of 14 different subunits. Subunits NuoA, H, J, K, L, M, N constitute the membrane sector of the complex.

The protein resides in the cell inner membrane. It carries out the reaction a quinone + NADH + 5 H(+)(in) = a quinol + NAD(+) + 4 H(+)(out). Functionally, NDH-1 shuttles electrons from NADH, via FMN and iron-sulfur (Fe-S) centers, to quinones in the respiratory chain. The immediate electron acceptor for the enzyme in this species is believed to be ubiquinone. Couples the redox reaction to proton translocation (for every two electrons transferred, four hydrogen ions are translocated across the cytoplasmic membrane), and thus conserves the redox energy in a proton gradient. This subunit may bind ubiquinone. This chain is NADH-quinone oxidoreductase subunit H, found in Xylella fastidiosa (strain 9a5c).